Consider the following 317-residue polypeptide: tRNA dimethylallyltransferase (317 aa).

14-21 (GPTAVGKT) lines the ATP pocket. A substrate-binding site is contributed by 16 to 21 (TAVGKT). The interaction with substrate tRNA stretch occupies residues 39–42 (DSMQ).

It belongs to the IPP transferase family. In terms of assembly, monomer. Mg(2+) is required as a cofactor.

It catalyses the reaction adenosine(37) in tRNA + dimethylallyl diphosphate = N(6)-dimethylallyladenosine(37) in tRNA + diphosphate. Its function is as follows. Catalyzes the transfer of a dimethylallyl group onto the adenine at position 37 in tRNAs that read codons beginning with uridine, leading to the formation of N6-(dimethylallyl)adenosine (i(6)A). This is tRNA dimethylallyltransferase from Bacillus mycoides (strain KBAB4) (Bacillus weihenstephanensis).